The chain runs to 166 residues: NAD(P)H-quinone oxidoreductase subunit I, chloroplastic (166 aa).

4Fe-4S ferredoxin-type domains lie at 55-84 (GRIHFEFDKCIACEVCVRVCPIDLPVVDWK) and 95-124 (LNYSIDFGICIFCGNCVEYCPTNCLSMTEE). Positions 64, 67, 70, 74, 104, 107, 110, and 114 each coordinate [4Fe-4S] cluster.

This sequence belongs to the complex I 23 kDa subunit family. NDH is composed of at least 16 different subunits, 5 of which are encoded in the nucleus. [4Fe-4S] cluster is required as a cofactor.

Its subcellular location is the plastid. It localises to the chloroplast thylakoid membrane. It carries out the reaction a plastoquinone + NADH + (n+1) H(+)(in) = a plastoquinol + NAD(+) + n H(+)(out). It catalyses the reaction a plastoquinone + NADPH + (n+1) H(+)(in) = a plastoquinol + NADP(+) + n H(+)(out). In terms of biological role, NDH shuttles electrons from NAD(P)H:plastoquinone, via FMN and iron-sulfur (Fe-S) centers, to quinones in the photosynthetic chain and possibly in a chloroplast respiratory chain. The immediate electron acceptor for the enzyme in this species is believed to be plastoquinone. Couples the redox reaction to proton translocation, and thus conserves the redox energy in a proton gradient. The sequence is that of NAD(P)H-quinone oxidoreductase subunit I, chloroplastic from Silphium perfoliatum (Cup plant).